The chain runs to 83 residues: Sulfur carrier protein TusA (83 aa).

C19 (cysteine persulfide intermediate) is an active-site residue.

Belongs to the sulfur carrier protein TusA family.

It localises to the cytoplasm. Sulfur carrier protein which probably makes part of a sulfur-relay system. This chain is Sulfur carrier protein TusA, found in Aliivibrio fischeri (strain ATCC 700601 / ES114) (Vibrio fischeri).